The primary structure comprises 105 residues: Flagellar transcriptional regulator FlhD (105 aa).

It belongs to the FlhD family. Homodimer; disulfide-linked. Forms a heterohexamer composed of two FlhC and four FlhD subunits. Each FlhC binds a FlhD dimer, forming a heterotrimer, and a hexamer assembles by dimerization of two heterotrimers.

It localises to the cytoplasm. Functions in complex with FlhC as a master transcriptional regulator that regulates transcription of several flagellar and non-flagellar operons by binding to their promoter region. Activates expression of class 2 flagellar genes, including fliA, which is a flagellum-specific sigma factor that turns on the class 3 genes. Also regulates genes whose products function in a variety of physiological pathways. This is Flagellar transcriptional regulator FlhD from Cupriavidus pinatubonensis (strain JMP 134 / LMG 1197) (Cupriavidus necator (strain JMP 134)).